A 327-amino-acid polypeptide reads, in one-letter code: DNA-directed RNA polymerase subunit alpha (327 aa).

The segment at 1-227 (MLIAHRPTLI…ELFGLARELN (227 aa)) is alpha N-terminal domain (alpha-NTD). Positions 244–327 (SDEDLRIPIE…GSYFDPNYGS (84 aa)) are alpha C-terminal domain (alpha-CTD).

This sequence belongs to the RNA polymerase alpha chain family. In terms of assembly, homodimer. The RNAP catalytic core consists of 2 alpha, 1 beta, 1 beta' and 1 omega subunit. When a sigma factor is associated with the core the holoenzyme is formed, which can initiate transcription.

The catalysed reaction is RNA(n) + a ribonucleoside 5'-triphosphate = RNA(n+1) + diphosphate. Its function is as follows. DNA-dependent RNA polymerase catalyzes the transcription of DNA into RNA using the four ribonucleoside triphosphates as substrates. The chain is DNA-directed RNA polymerase subunit alpha from Tropheryma whipplei (strain TW08/27) (Whipple's bacillus).